Consider the following 316-residue polypeptide: Ribosomal RNA small subunit methyltransferase H (316 aa).

S-adenosyl-L-methionine-binding positions include 35–37 (AGH), aspartate 55, phenylalanine 84, aspartate 105, and glutamine 112.

Belongs to the methyltransferase superfamily. RsmH family.

It is found in the cytoplasm. It carries out the reaction cytidine(1402) in 16S rRNA + S-adenosyl-L-methionine = N(4)-methylcytidine(1402) in 16S rRNA + S-adenosyl-L-homocysteine + H(+). Specifically methylates the N4 position of cytidine in position 1402 (C1402) of 16S rRNA. This chain is Ribosomal RNA small subunit methyltransferase H, found in Streptococcus thermophilus (strain CNRZ 1066).